The following is a 624-amino-acid chain: E3 ubiquitin-protein ligase RLIM (624 aa).

Met-1 is subject to N-acetylmethionine. The span at 1–11 (MENSDSNDKGS) shows a compositional bias: basic and acidic residues. Disordered stretches follow at residues 1-25 (MENS…QMDR), 72-251 (KEGP…SQTF), 257-276 (NETE…QQIS), 291-363 (TRNA…RGGF), and 424-522 (SDSE…TFDE). Over residues 104–132 (SVRQTGNTTRSGQRGNQSWRAVSRTNPNS) the composition is skewed to polar residues. A compositionally biased stretch (low complexity) spans 142–153 (NVNRNNGSQNSE). At Ser-164 the chain carries Phosphoserine. Residues 165-188 (GENVENNSQRQVENPRSESTSARP) show a composition bias toward polar residues. A phosphoserine mark is found at Ser-195, Ser-228, Ser-230, and Ser-276. The span at 214-229 (RSPDHRRTRARAERSR) shows a compositional bias: basic and acidic residues. Positions 291 to 315 (TRNASQGAGSSDTAASGESTGSGQR) are enriched in polar residues. A compositionally biased stretch (basic and acidic residues) spans 329-339 (RPGEYRQRDSI). The span at 340–356 (ASRTRSRSQTPNNTVTY) shows a compositional bias: polar residues. Over residues 445-454 (GRGGSGGGSS) the composition is skewed to gly residues. A compositionally biased stretch (low complexity) spans 455–507 (SGSSSSSSSSSSSSSSSSSSSSPSSSSGGESSETSSDLFEGSNEGSSSSGSSG). The segment at 570–611 (CSVCITEYTEGNKLRKLPCSHEYHVHCIDRWLSENSTCPICR) adopts an RING-type zinc-finger fold. The PDZ-binding signature appears at 621–624 (ESVV).

Belongs to the RNF12 family. As to quaternary structure, interacts with LIM/homeobox factors such as LHX3. Interacts with LDB1, LDB2 and SIN3A. Interacts with LIMK1. Interacts (via N-terminus) with TERF1. Interacts (via C-terminus) with ESR1. Expressed in many tissues.

The protein resides in the nucleus. The catalysed reaction is S-ubiquitinyl-[E2 ubiquitin-conjugating enzyme]-L-cysteine + [acceptor protein]-L-lysine = [E2 ubiquitin-conjugating enzyme]-L-cysteine + N(6)-ubiquitinyl-[acceptor protein]-L-lysine.. It functions in the pathway protein modification; protein ubiquitination. E3 ubiquitin-protein ligase. Acts as a negative coregulator for LIM homeodomain transcription factors by mediating the ubiquitination and subsequent degradation of LIM cofactors LDB1 and LDB2 and by mediating the recruitment the SIN3a/histone deacetylase corepressor complex. Ubiquitination and degradation of LIM cofactors LDB1 and LDB2 allows DNA-bound LIM homeodomain transcription factors to interact with other protein partners such as RLIM. Plays a role in telomere length-mediated growth suppression by mediating the ubiquitination and degradation of TERF1. By targeting ZFP42 for degradation, acts as an activator of random inactivation of X chromosome in the embryo, a stochastic process in which one X chromosome is inactivated to minimize sex-related dosage differences of X-encoded genes in somatic cells of female placental mammals. This is E3 ubiquitin-protein ligase RLIM (RLIM) from Homo sapiens (Human).